Consider the following 332-residue polypeptide: 5-dehydro-2-deoxygluconokinase (332 aa).

Belongs to the carbohydrate kinase PfkB family.

It carries out the reaction 5-dehydro-2-deoxy-D-gluconate + ATP = 6-phospho-5-dehydro-2-deoxy-D-gluconate + ADP + H(+). It participates in polyol metabolism; myo-inositol degradation into acetyl-CoA; acetyl-CoA from myo-inositol: step 5/7. In terms of biological role, catalyzes the phosphorylation of 5-dehydro-2-deoxy-D-gluconate (2-deoxy-5-keto-D-gluconate or DKG) to 6-phospho-5-dehydro-2-deoxy-D-gluconate (DKGP). The protein is 5-dehydro-2-deoxygluconokinase of Bacillus anthracis (strain A0248).